Here is a 583-residue protein sequence, read N- to C-terminus: Aspartate--tRNA ligase (583 aa).

E169 provides a ligand contact to L-aspartate. Residues 193–196 (QLFK) form an aspartate region. Position 215 (R215) interacts with L-aspartate. Residues 215-217 (RDE) and Q224 contribute to the ATP site. H443 is an L-aspartate binding site. Residue E477 participates in ATP binding. An L-aspartate-binding site is contributed by R484. 529 to 532 (GIDR) contributes to the ATP binding site.

It belongs to the class-II aminoacyl-tRNA synthetase family. Type 1 subfamily. As to quaternary structure, homodimer.

It localises to the cytoplasm. It catalyses the reaction tRNA(Asp) + L-aspartate + ATP = L-aspartyl-tRNA(Asp) + AMP + diphosphate. In terms of biological role, catalyzes the attachment of L-aspartate to tRNA(Asp) in a two-step reaction: L-aspartate is first activated by ATP to form Asp-AMP and then transferred to the acceptor end of tRNA(Asp). The protein is Aspartate--tRNA ligase of Stenotrophomonas maltophilia (strain K279a).